Consider the following 473-residue polypeptide: Glutathione reductase, mitochondrial (473 aa).

2 residues coordinate FAD: Ser30 and Gly31. Residue Ser30 coordinates glutathione. Arg37 is a binding site for glutathione. FAD contacts are provided by Glu50, Thr57, Cys58, and Lys66. An intrachain disulfide couples Cys58 to Cys63. Residue Tyr114 coordinates glutathione. Ala130 provides a ligand contact to FAD. 6 residues coordinate NADP(+): Ala190, Ile193, Glu196, Arg213, Arg219, and Gly279. Asp320 contacts FAD. Residue Leu326 coordinates NADP(+). Thr328 provides a ligand contact to FAD. Position 336 (Arg336) interacts with glutathione. Val359 contacts NADP(+). His456 provides a ligand contact to FAD. Catalysis depends on His456, which acts as the Proton acceptor.

Belongs to the class-I pyridine nucleotide-disulfide oxidoreductase family. Requires FAD as cofactor. As to expression, expressed at all larval stages and in adults in intestine, vulva muscle, pharynx and some cells in the tail.

The protein localises to the cytoplasm. Its subcellular location is the mitochondrion. It catalyses the reaction 2 glutathione + NADP(+) = glutathione disulfide + NADPH + H(+). Its function is as follows. Catalyzes the reduction of glutathione disulfide (GSSG) to reduced glutathione (GSH). Constitutes the major mechanism to maintain a high GSH:GSSG ratio in the cytosol. Involved in resistance to oxidative stress and starvation. Together with thioredoxin reductase txtr-1, required for the reduction of disulfide groups in the cuticle during molting. The chain is Glutathione reductase, mitochondrial from Caenorhabditis elegans.